The chain runs to 316 residues: Leucine-rich repeat-containing protein 73 (316 aa).

7 LRR repeats span residues 57 to 78, 86 to 106, 114 to 137, 145 to 166, 174 to 187, 202 to 223, and 231 to 250; these read SLAQ…KQLA, SIQS…ALLN, ALVA…CGLL, GLKE…SRLA, QVRV…PLGD, TLEV…TLLD, and ALRS…QQQI. The tract at residues 257 to 296 is disordered; the sequence is GEEEEEMAGGAADTQEWGRGREPAAHQRGGSSWKCPSDPN. Basic and acidic residues predominate over residues 272–281; that stretch reads EWGRGREPAA.

In Rattus norvegicus (Rat), this protein is Leucine-rich repeat-containing protein 73 (Lrrc73).